A 127-amino-acid polypeptide reads, in one-letter code: Fluoride-specific ion channel FluC 1 (127 aa).

A run of 4 helical transmembrane segments spans residues 4-24, 35-55, 71-91, and 101-121; these read TLLA…LVSL, VGTL…LAFF, TGFC…VYLI, and GTIL…FILV. Glycine 75 and threonine 78 together coordinate Na(+).

It belongs to the fluoride channel Fluc/FEX (TC 1.A.43) family.

It localises to the cell inner membrane. It carries out the reaction fluoride(in) = fluoride(out). Its activity is regulated as follows. Na(+) is not transported, but it plays an essential structural role and its presence is essential for fluoride channel function. Its function is as follows. Fluoride-specific ion channel. Important for reducing fluoride concentration in the cell, thus reducing its toxicity. In Yersinia pestis, this protein is Fluoride-specific ion channel FluC 1.